Consider the following 290-residue polypeptide: Acetyl-coenzyme A carboxylase carboxyl transferase subunit beta (290 aa).

The region spanning 29 to 290 (LWGKCPECSQ…RLHGYREKRK (262 aa)) is the CoA carboxyltransferase N-terminal domain. C33, C36, C52, and C55 together coordinate Zn(2+). A C4-type zinc finger spans residues 33 to 55 (CPECSQVVYRKDLLENANVCSNC).

This sequence belongs to the AccD/PCCB family. Acetyl-CoA carboxylase is a heterohexamer composed of biotin carboxyl carrier protein (AccB), biotin carboxylase (AccC) and two subunits each of ACCase subunit alpha (AccA) and ACCase subunit beta (AccD). Requires Zn(2+) as cofactor.

Its subcellular location is the cytoplasm. It carries out the reaction N(6)-carboxybiotinyl-L-lysyl-[protein] + acetyl-CoA = N(6)-biotinyl-L-lysyl-[protein] + malonyl-CoA. Its pathway is lipid metabolism; malonyl-CoA biosynthesis; malonyl-CoA from acetyl-CoA: step 1/1. In terms of biological role, component of the acetyl coenzyme A carboxylase (ACC) complex. Biotin carboxylase (BC) catalyzes the carboxylation of biotin on its carrier protein (BCCP) and then the CO(2) group is transferred by the transcarboxylase to acetyl-CoA to form malonyl-CoA. In Prochlorococcus marinus (strain MIT 9211), this protein is Acetyl-coenzyme A carboxylase carboxyl transferase subunit beta.